We begin with the raw amino-acid sequence, 238 residues long: MTPHINAPAGAFADVVLMPGDPLRAKYIAETFLDQPELVTDVRNMLGYTGSYKGRRISVMGHGMGIPSCSIYSKELITEYGVKKIIRVGSCGAVRQDVHVRDVIIGLGACTDSKVNRIRFRDNDFAAIADFGMAQAAVQAAKNKKIKVHVGNLFSADLFYTPDVEMFDVMEKYGILGVEMEAAGIYGVAAEFGAKALSICTVSDHIRSGEQTSSEERQTTFNEMIEIALESVLLGDND.

H4 lines the a purine D-ribonucleoside pocket. Phosphate is bound by residues G20, R24, R43, and R87–S90. A purine D-ribonucleoside-binding positions include E179 to E181 and S203 to D204. D204 functions as the Proton donor in the catalytic mechanism.

This sequence belongs to the PNP/UDP phosphorylase family. As to quaternary structure, homohexamer; trimer of homodimers.

The enzyme catalyses a purine D-ribonucleoside + phosphate = a purine nucleobase + alpha-D-ribose 1-phosphate. It carries out the reaction a purine 2'-deoxy-D-ribonucleoside + phosphate = a purine nucleobase + 2-deoxy-alpha-D-ribose 1-phosphate. In terms of biological role, catalyzes the reversible phosphorolytic breakdown of the N-glycosidic bond in the beta-(deoxy)ribonucleoside molecules, with the formation of the corresponding free purine bases and pentose-1-phosphate. The protein is Purine nucleoside phosphorylase DeoD-type of Actinobacillus succinogenes (strain ATCC 55618 / DSM 22257 / CCUG 43843 / 130Z).